A 436-amino-acid chain; its full sequence is GTPase Obg (436 aa).

The 159-residue stretch at 2-160 (SMFLDTAKVS…RELALELKIL (159 aa)) folds into the Obg domain. One can recognise an OBG-type G domain in the interval 161 to 338 (ADVGLVGFPS…LLDATAQLLA (178 aa)). Residues 167-174 (GFPSVGKS), 192-196 (FTTIV), 214-217 (DLPG), 284-287 (NKMD), and 319-321 (SGI) each bind GTP. The Mg(2+) site is built by serine 174 and threonine 194. Residues 358–436 (GFEEEEKAFD…IGKFEFEFVD (79 aa)) enclose the OCT domain.

It belongs to the TRAFAC class OBG-HflX-like GTPase superfamily. OBG GTPase family. As to quaternary structure, monomer. Mg(2+) serves as cofactor.

The protein resides in the cytoplasm. Its function is as follows. An essential GTPase which binds GTP, GDP and possibly (p)ppGpp with moderate affinity, with high nucleotide exchange rates and a fairly low GTP hydrolysis rate. Plays a role in control of the cell cycle, stress response, ribosome biogenesis and in those bacteria that undergo differentiation, in morphogenesis control. The polypeptide is GTPase Obg (Streptococcus mutans serotype c (strain ATCC 700610 / UA159)).